A 473-amino-acid chain; its full sequence is UDP-N-acetylmuramate--L-alanine ligase (473 aa).

112-118 (GTHGKTT) is a binding site for ATP.

This sequence belongs to the MurCDEF family.

It localises to the cytoplasm. The catalysed reaction is UDP-N-acetyl-alpha-D-muramate + L-alanine + ATP = UDP-N-acetyl-alpha-D-muramoyl-L-alanine + ADP + phosphate + H(+). It functions in the pathway cell wall biogenesis; peptidoglycan biosynthesis. In terms of biological role, cell wall formation. This Nitrosomonas eutropha (strain DSM 101675 / C91 / Nm57) protein is UDP-N-acetylmuramate--L-alanine ligase.